Consider the following 337-residue polypeptide: Fructose-1,6-bisphosphatase class 1 (337 aa).

Residues Glu94, Asp116, Leu118, and Asp119 each contribute to the Mg(2+) site. Substrate-binding positions include 119 to 122, Asn210, and Lys276; that span reads DGSS. Glu282 lines the Mg(2+) pocket.

The protein belongs to the FBPase class 1 family. As to quaternary structure, homotetramer. Mg(2+) is required as a cofactor.

The protein localises to the cytoplasm. The enzyme catalyses beta-D-fructose 1,6-bisphosphate + H2O = beta-D-fructose 6-phosphate + phosphate. Its pathway is carbohydrate biosynthesis; gluconeogenesis. The protein is Fructose-1,6-bisphosphatase class 1 of Burkholderia orbicola (strain MC0-3).